Reading from the N-terminus, the 832-residue chain is Regulator of drug sensitivity 1 (832 aa).

The segment at residues 15 to 42 (CLQCKKIKRKCDKLRPACSRCQQNSLQC) is a DNA-binding region (zn(2)-C6 fungal-type).

It localises to the nucleus. Zinc cluster transcription factor involved in resistance to cycloheximide. This Saccharomyces cerevisiae (strain ATCC 204508 / S288c) (Baker's yeast) protein is Regulator of drug sensitivity 1 (RDS1).